The primary structure comprises 218 residues: MDKSESTSAGRNRRRRPRRGSRSASSSADANFRVLSQQLSRLNKTLAAGRPTINHPTFVGSERCRPGYTFTSITLRPPKIDRGSYYGKRLLLPDSVTEYDKKLVSRVQIRVNPLPKFDSTVWVTVRKVLASSDLSVAAISAMFADGASPVLVYQYAASGVQTNNKLLCDLSAMRADIGDMRKYAILVYSKDDALETDELVLHVDIEHQRIPTSRVLPV.

Met1 is subject to N-acetylmethionine; by host. Positions 1-10 are enriched in low complexity; it reads MDKSESTSAG. Positions 1–30 are disordered; the sequence is MDKSESTSAGRNRRRRPRRGSRSASSSADA. Basic residues predominate over residues 11–21; it reads RNRRRRPRRGS.

This sequence belongs to the cucumovirus capsid protein family.

Its subcellular location is the virion. Functionally, capsid protein. Probably binds RNA and plays a role in packaging. The sequence is that of Capsid protein from Cucumis sativus (Cucumber).